Reading from the N-terminus, the 322-residue chain is Alanine dehydrogenase (322 aa).

The active-site Proton donor/acceptor is the lysine 65. NAD(+) is bound by residues arginine 108, 135–136 (TQ), 157–159 (DVR), 217–219 (GAD), lysine 223, and serine 290.

This sequence belongs to the ornithine cyclodeaminase/mu-crystallin family. Archaeal alanine dehydrogenase subfamily. As to quaternary structure, homodimer.

It carries out the reaction L-alanine + NAD(+) + H2O = pyruvate + NH4(+) + NADH + H(+). Its function is as follows. Catalyzes the NAD(+)-dependent oxidative deamination of L-alanine to pyruvate, and the reverse reaction, the reductive amination of pyruvate. Its physiological role is not known. Cannot use NADP(+) instead of NAD(+) as a cosubstrate. In the deamination direction, can also efficiently use L-2-aminobutyrate as substrate. In the reductive amination direction, also exhibits high activity with 2-oxobutyrate and oxaloacetate as substrate. In contrast to bacterial homologs, does not exhibit any ornithine cyclodeaminase activity. The sequence is that of Alanine dehydrogenase from Archaeoglobus fulgidus (strain ATCC 49558 / DSM 4304 / JCM 9628 / NBRC 100126 / VC-16).